Consider the following 310-residue polypeptide: MKPKIFIDGEHGTTGLQIRTRLAERDDLEVISIPEAERRNKDLRADYLRAADIAILCLPDDASKEAVSLLEGHNSTRIIDTSTAHRVHPDWAYGFAELTKGQRERIAEARLVANPGCYPTGAIALVRPLRDAGLLPADYPVSVNAVSGYTGGGKQLIAQMEDRNHPDYLAANNFLYGLPLKHKHVPELQLHGRLDRRPIFSPSVGRFPQGMIVQVPLFLSELEGSPSLAKVHAVLTEHYAGQDIVDVVPLEESAKLPRVDAEELAGKDGMKLFVFGTEDHGQVNLVALLDNLGKGASGAAVQNMNLMLGK.

Cysteine 117 is an active-site residue.

Belongs to the NAGSA dehydrogenase family. Type 2 subfamily.

It localises to the cytoplasm. The catalysed reaction is N-acetyl-L-glutamate 5-semialdehyde + phosphate + NADP(+) = N-acetyl-L-glutamyl 5-phosphate + NADPH + H(+). Its pathway is amino-acid biosynthesis; L-arginine biosynthesis; N(2)-acetyl-L-ornithine from L-glutamate: step 3/4. Catalyzes the NADPH-dependent reduction of N-acetyl-5-glutamyl phosphate to yield N-acetyl-L-glutamate 5-semialdehyde. This Brucella suis (strain ATCC 23445 / NCTC 10510) protein is N-acetyl-gamma-glutamyl-phosphate reductase.